The chain runs to 258 residues: Chymotrypsin-like elastase family member 1 (258 aa).

Residues Met-1–Ser-8 form the signal peptide. Residues Thr-9 to Arg-18 constitute a propeptide, activation peptide. In terms of domain architecture, Peptidase S1 spans Val-19 to Ala-256. Residues Cys-48 and Cys-64 are joined by a disulfide bond. The active-site Charge relay system is His-63. The Ca(2+) site is built by Asp-77, Asn-79, Gln-82, and Glu-87. An N-linked (GlcNAc...) asparagine glycan is attached at Asn-79. Catalysis depends on Asp-111, which acts as the Charge relay system. 3 disulfide bridges follow: Cys-145-Cys-212, Cys-176-Cys-192, and Cys-202-Cys-232. The active-site Charge relay system is the Ser-206. Asn-233 carries N-linked (GlcNAc...) asparagine glycosylation.

It belongs to the peptidase S1 family. Elastase subfamily. Requires Ca(2+) as cofactor. As to expression, basal layers of epidermis (at protein level). Not expressed in the pancreas.

The protein localises to the secreted. The enzyme catalyses Hydrolysis of proteins, including elastin. Preferential cleavage: Ala-|-Xaa.. In terms of biological role, serine proteases that hydrolyze many proteins in addition to elastin. In Homo sapiens (Human), this protein is Chymotrypsin-like elastase family member 1 (CELA1).